Consider the following 667-residue polypeptide: Soluble guanylate cyclase 89Da (667 aa).

His104 is a binding site for heme. The segment at 337–364 (AQEFSESHPVDDDESAREDEIDPATGER) is disordered. Residues 347-358 (DDDESAREDEID) are compositionally biased toward acidic residues. Positions 427–455 (QHCSKLEIMFEKEEQRSDELEKSLELADS) form a coiled coil. A Guanylate cyclase domain is found at 491-617 (SVIFLEVMNV…DTVNTASRME (127 aa)).

The protein belongs to the adenylyl cyclase class-4/guanylyl cyclase family. As to quaternary structure, heterodimer; with Gyc88E, in the presence of magnesium or manganese. Requires heme as cofactor.

It is found in the cytoplasm. It carries out the reaction GTP = 3',5'-cyclic GMP + diphosphate. Its activity is regulated as follows. Probably not activated by nitric oxide (NO). Heterodimer also exhibits some stimulation, some compounds (SIN-1 and two of the NONOates) that were ineffective at stimulating Gyc-88E alone did stimulate the heterodimer. Heterodimers with Gyc-89Da and Gyc-89Db are activated in response to changing oxygen concentrations, alerting flies to hypoxic environments. Under normal oxygen concentrations, oxygen binds to the heme group and results in low levels of guanylyl cyclase activity. When exposed to reduced oxygen concentrations, the oxygen dissociates from the heme group resulting in activation of the enzyme. The protein is Soluble guanylate cyclase 89Da of Drosophila melanogaster (Fruit fly).